Here is a 253-residue protein sequence, read N- to C-terminus: 28 kDa inner dynein arm light chain, axonemal (253 aa).

A disordered region spans residues 19 to 44 (TSKDKGKGAKGTPGKKGALPPVEQKP). Positions 160–239 (IRKALQTEQG…LKQQLETFLV (80 aa)) form a coiled coil.

It belongs to the inner dynein arm light chain family.

The protein resides in the cytoplasm. It is found in the cytoskeleton. It localises to the flagellum axoneme. Functionally, plays a dynamic role in flagellar motility. May be necessary for stable assembly of a subset of inner dynein arms or for the binding of these arms to the outer doublet microtubules of the axoneme. This chain is 28 kDa inner dynein arm light chain, axonemal (IDA4), found in Chlamydomonas reinhardtii (Chlamydomonas smithii).